Here is a 326-residue protein sequence, read N- to C-terminus: Holliday junction branch migration complex subunit RuvB (326 aa).

Positions 1-180 are large ATPase domain (RuvB-L); it reads MRSISCSKEY…FGIPLRLEFY (180 aa). ATP is bound by residues Ile19, Arg20, Gly61, Lys64, Thr65, Thr66, 127–129, Arg170, Tyr180, and Arg217; that span reads EDF. Thr65 contributes to the Mg(2+) binding site. Residues 181–251 are small ATPAse domain (RuvB-S); the sequence is SFEELVDIIK…IADSALSKLG (71 aa). Positions 254–326 are head domain (RuvB-H); sequence KMGLNKLDVD…QGKEYLSLQY (73 aa). Residues Arg307 and Arg312 each contribute to the DNA site.

Belongs to the RuvB family. In terms of assembly, homohexamer. Forms an RuvA(8)-RuvB(12)-Holliday junction (HJ) complex. HJ DNA is sandwiched between 2 RuvA tetramers; dsDNA enters through RuvA and exits via RuvB. An RuvB hexamer assembles on each DNA strand where it exits the tetramer. Each RuvB hexamer is contacted by two RuvA subunits (via domain III) on 2 adjacent RuvB subunits; this complex drives branch migration. In the full resolvosome a probable DNA-RuvA(4)-RuvB(12)-RuvC(2) complex forms which resolves the HJ.

It is found in the cytoplasm. The enzyme catalyses ATP + H2O = ADP + phosphate + H(+). Functionally, the RuvA-RuvB-RuvC complex processes Holliday junction (HJ) DNA during genetic recombination and DNA repair, while the RuvA-RuvB complex plays an important role in the rescue of blocked DNA replication forks via replication fork reversal (RFR). RuvA specifically binds to HJ cruciform DNA, conferring on it an open structure. The RuvB hexamer acts as an ATP-dependent pump, pulling dsDNA into and through the RuvAB complex. RuvB forms 2 homohexamers on either side of HJ DNA bound by 1 or 2 RuvA tetramers; 4 subunits per hexamer contact DNA at a time. Coordinated motions by a converter formed by DNA-disengaged RuvB subunits stimulates ATP hydrolysis and nucleotide exchange. Immobilization of the converter enables RuvB to convert the ATP-contained energy into a lever motion, pulling 2 nucleotides of DNA out of the RuvA tetramer per ATP hydrolyzed, thus driving DNA branch migration. The RuvB motors rotate together with the DNA substrate, which together with the progressing nucleotide cycle form the mechanistic basis for DNA recombination by continuous HJ branch migration. Branch migration allows RuvC to scan DNA until it finds its consensus sequence, where it cleaves and resolves cruciform DNA. In Wolbachia sp. subsp. Brugia malayi (strain TRS), this protein is Holliday junction branch migration complex subunit RuvB.